The sequence spans 139 residues: ATP synthase epsilon chain (139 aa).

This sequence belongs to the ATPase epsilon chain family. F-type ATPases have 2 components, CF(1) - the catalytic core - and CF(0) - the membrane proton channel. CF(1) has five subunits: alpha(3), beta(3), gamma(1), delta(1), epsilon(1). CF(0) has three main subunits: a, b and c.

It localises to the cell membrane. Its function is as follows. Produces ATP from ADP in the presence of a proton gradient across the membrane. This chain is ATP synthase epsilon chain, found in Levilactobacillus brevis (strain ATCC 367 / BCRC 12310 / CIP 105137 / JCM 1170 / LMG 11437 / NCIMB 947 / NCTC 947) (Lactobacillus brevis).